The sequence spans 708 residues: Leukotoxin translocation ATP-binding protein LktB (708 aa).

The region spanning 1–126 (MEANHQRNDL…ACYQGQLILV (126 aa)) is the Peptidase C39 domain. The 283-residue stretch at 155-437 (FLETLIVSIF…LAQLWQDFQQ (283 aa)) folds into the ABC transmembrane type-1 domain. Transmembrane regions (helical) follow at residues 159–179 (LIVS…FQVV), 192–212 (LNII…LSGL), 270–290 (ALTS…MWYY), 296–316 (LVIL…SPIL), and 389–409 (VMVI…LSIG). The ABC transporter domain maps to 469-704 (ISFKNIRFRY…SNGLYSYLHQ (236 aa)). Position 503 to 510 (503 to 510 (GRSGSGKS)) interacts with ATP.

Belongs to the ABC transporter superfamily. Protein-1 exporter (TC 3.A.1.109) family. In terms of assembly, homodimer.

The protein localises to the cell inner membrane. The enzyme catalyses ATP + H2O + proteinSide 1 = ADP + phosphate + proteinSide 2.. Part of the ABC transporter complex LktBD involved in leukotoxin export. Transmembrane domains (TMD) form a pore in the inner membrane and the ATP-binding domain (NBD) is responsible for energy generation. In Mannheimia haemolytica (Pasteurella haemolytica), this protein is Leukotoxin translocation ATP-binding protein LktB (lktB).